Here is a 61-residue protein sequence, read N- to C-terminus: Large ribosomal subunit protein uL30 (61 aa).

This sequence belongs to the universal ribosomal protein uL30 family. As to quaternary structure, part of the 50S ribosomal subunit.

The polypeptide is Large ribosomal subunit protein uL30 (Caulobacter vibrioides (strain ATCC 19089 / CIP 103742 / CB 15) (Caulobacter crescentus)).